The primary structure comprises 1335 residues: Protein SPATA31F1 (1335 aa).

A helical transmembrane segment spans residues L8 to I28. 5 disordered regions span residues A403–D424, L480–S502, V972–M1002, P1019–S1141, and E1248–T1335. Residues S414–D424 are compositionally biased toward polar residues. The segment covering V972–G1000 has biased composition (polar residues). Composition is skewed to basic and acidic residues over residues N1047–D1064, S1071–R1083, and P1129–Q1139.

Belongs to the SPATA31 family.

The protein resides in the membrane. The chain is Protein SPATA31F1 from Homo sapiens (Human).